The primary structure comprises 244 residues: MAGHSKWAQIKRKKAANDLKRGKLISKHLRAIQAAARAGGSPYPEANVQLRNAIEAARADDVPMENIERLLQKLQGGGEGAEQYEEIVYEGYAPGGVALLVYALTDNRNRTASEVRHVFSKHGGSLGTTGSVAWQFERRGVVVCENTEAAQEAAIELGALDLEEEGENLTVYTEPTEAYRIAEALKAKGVRVEAVEVVQHPQNTVALPPEEAQKVMRLVEALEDLDDVQHVYTNLDPESLQVEA.

Belongs to the TACO1 family.

The protein localises to the cytoplasm. The chain is Probable transcriptional regulatory protein TT_C0469 from Thermus thermophilus (strain ATCC BAA-163 / DSM 7039 / HB27).